Consider the following 380-residue polypeptide: Alcohol dehydrogenase 2 (380 aa).

Zn(2+) contacts are provided by Cys-48, Thr-50, His-70, Cys-100, Cys-103, Cys-106, Cys-114, and Cys-178. An alcohol-binding residues include Thr-50 and His-70. Residue Thr-50 coordinates NAD(+). Residues 203 to 208 (GLGAVG), Asp-227, Arg-232, Thr-273, Val-296, 296 to 298 (VGV), Phe-323, and Arg-373 each bind NAD(+).

This sequence belongs to the zinc-containing alcohol dehydrogenase family. As to quaternary structure, homodimer. Homotetramer. Requires Zn(2+) as cofactor.

Its subcellular location is the cytoplasm. It catalyses the reaction a primary alcohol + NAD(+) = an aldehyde + NADH + H(+). The enzyme catalyses a secondary alcohol + NAD(+) = a ketone + NADH + H(+). This is Alcohol dehydrogenase 2 (ADH2) from Solanum tuberosum (Potato).